Reading from the N-terminus, the 606-residue chain is Probable glutamine--fructose-6-phosphate aminotransferase [isomerizing] (606 aa).

Cysteine 2 acts as the For GATase activity in catalysis. A Glutamine amidotransferase type-2 domain is found at 2–224 (CGISACLNHT…DNDYGYITNN (223 aa)). 2 consecutive SIS domains span residues 282–427 (FFPE…SLDN) and 458–596 (LLEF…PDYP).

It catalyses the reaction D-fructose 6-phosphate + L-glutamine = D-glucosamine 6-phosphate + L-glutamate. It participates in nucleotide-sugar biosynthesis; UDP-N-acetyl-alpha-D-glucosamine biosynthesis; alpha-D-glucosamine 6-phosphate from D-fructose 6-phosphate: step 1/1. Controls the flux of glucose into the hexosamine pathway. Most likely involved in regulating the availability of precursors for glycosylation of proteins (Potential). The sequence is that of Probable glutamine--fructose-6-phosphate aminotransferase [isomerizing] from Acanthamoeba polyphaga (Amoeba).